Consider the following 286-residue polypeptide: Bifunctional protein FolD (286 aa).

Residues 168-170, Thr195, and Val236 each bind NADP(+); that span reads GRG.

This sequence belongs to the tetrahydrofolate dehydrogenase/cyclohydrolase family. As to quaternary structure, homodimer.

It carries out the reaction (6R)-5,10-methylene-5,6,7,8-tetrahydrofolate + NADP(+) = (6R)-5,10-methenyltetrahydrofolate + NADPH. The enzyme catalyses (6R)-5,10-methenyltetrahydrofolate + H2O = (6R)-10-formyltetrahydrofolate + H(+). Its pathway is one-carbon metabolism; tetrahydrofolate interconversion. In terms of biological role, catalyzes the oxidation of 5,10-methylenetetrahydrofolate to 5,10-methenyltetrahydrofolate and then the hydrolysis of 5,10-methenyltetrahydrofolate to 10-formyltetrahydrofolate. This Mycolicibacterium fortuitum (Mycobacterium fortuitum) protein is Bifunctional protein FolD.